We begin with the raw amino-acid sequence, 320 residues long: Eukaryotic translation initiation factor 3 subunit G (320 aa).

Positions 1-60 are disordered; it reads MPTGDFDSKPSWADQVEEEGEDDKCVTSELLKGIPLPTGDTSPEPELLPGDPLPPPKEVI. 2 positions are modified to phosphoserine: serine 8 and serine 11. Phosphothreonine is present on residues threonine 38 and threonine 41. Residues serine 42, serine 189, serine 223, and serine 264 each carry the phosphoserine modification. The segment at 204-233 is disordered; the sequence is QAAQSKTGKYVPPSLRDGASRRGESMQPNR. The segment covering 221–233 has biased composition (basic and acidic residues); it reads GASRRGESMQPNR. The 79-residue stretch at 239–317 folds into the RRM domain; it reads ATIRVTNLSE…LILNVEWAKP (79 aa).

The protein belongs to the eIF-3 subunit G family. In terms of assembly, component of the eukaryotic translation initiation factor 3 (eIF-3) complex, which is composed of 13 subunits: EIF3A, EIF3B, EIF3C, EIF3D, EIF3E, EIF3F, EIF3G, EIF3H, EIF3I, EIF3J, EIF3K, EIF3L and EIF3M. The eIF-3 complex appears to include 3 stable modules: module A is composed of EIF3A, EIF3B, EIF3G and EIF3I; module B is composed of EIF3F, EIF3H, and EIF3M; and module C is composed of EIF3C, EIF3D, EIF3E, EIF3K and EIF3L. EIF3C of module C binds EIF3B of module A and EIF3H of module B, thereby linking the three modules. EIF3J is a labile subunit that binds to the eIF-3 complex via EIF3B. The eIF-3 complex may interact with RPS6KB1 under conditions of nutrient depletion. Mitogenic stimulation may lead to binding and activation of a complex composed of MTOR and RPTOR, leading to phosphorylation and release of RPS6KB1 and binding of EIF4B to eIF-3. Interacts (via C-terminus) with AIFM1 (via N-terminus). Interacts with DHX33; the interaction is independent of RNA. Post-translationally, phosphorylated. Phosphorylation is enhanced upon serum stimulation.

It localises to the cytoplasm. The protein resides in the nucleus. It is found in the perinuclear region. In terms of biological role, RNA-binding component of the eukaryotic translation initiation factor 3 (eIF-3) complex, which is required for several steps in the initiation of protein synthesis. The eIF-3 complex associates with the 40S ribosome and facilitates the recruitment of eIF-1, eIF-1A, eIF-2:GTP:methionyl-tRNAi and eIF-5 to form the 43S pre-initiation complex (43S PIC). The eIF-3 complex stimulates mRNA recruitment to the 43S PIC and scanning of the mRNA for AUG recognition. The eIF-3 complex is also required for disassembly and recycling of post-termination ribosomal complexes and subsequently prevents premature joining of the 40S and 60S ribosomal subunits prior to initiation. The eIF-3 complex specifically targets and initiates translation of a subset of mRNAs involved in cell proliferation, including cell cycling, differentiation and apoptosis, and uses different modes of RNA stem-loop binding to exert either translational activation or repression. This subunit can bind 18S rRNA. The protein is Eukaryotic translation initiation factor 3 subunit G (Eif3g) of Mus musculus (Mouse).